A 314-amino-acid polypeptide reads, in one-letter code: Homoserine kinase (314 aa).

Residue 95 to 105 coordinates ATP; it reads PHSRGLGSSAA.

The protein belongs to the GHMP kinase family. Homoserine kinase subfamily.

It is found in the cytoplasm. The catalysed reaction is L-homoserine + ATP = O-phospho-L-homoserine + ADP + H(+). Its pathway is amino-acid biosynthesis; L-threonine biosynthesis; L-threonine from L-aspartate: step 4/5. Catalyzes the ATP-dependent phosphorylation of L-homoserine to L-homoserine phosphate. This chain is Homoserine kinase, found in Mycobacterium sp. (strain JLS).